We begin with the raw amino-acid sequence, 66 residues long: Phylloseptin-H5 (66 aa).

Positions 1-22 are cleaved as a signal peptide; the sequence is MAFLKKSLFLVLFLGLVSLSIC. The propeptide occupies 23–44; sequence EEEKRETEEEENEQEDDDKSEE. Residues 24–44 form a disordered region; it reads EEKRETEEEENEQEDDDKSEE. The segment covering 30 to 41 has biased composition (acidic residues); that stretch reads EEEENEQEDDDK. Phe-65 is modified (phenylalanine amide).

In terms of tissue distribution, expressed by the skin glands.

Its subcellular location is the secreted. In terms of biological role, has antibacterial activity against the Gram-negative bacteria E.coli and P.aeruginosa, and the Gram-positive bacterium S.aureus. No hemolytic activity. The polypeptide is Phylloseptin-H5 (psn7) (Pithecopus hypochondrialis (Orange-legged leaf frog)).